Consider the following 411-residue polypeptide: MISKLKMPQPTVNIGMVGHVDHGKSTLTLALTGVKTDTHSEEIKRGISIKLGYADTPVYKCYDASGNPYYTRQPSENCELERVISIVDAPGHETLMATMLSGSALMNGALLVIAANEHCPQPQTREHLTALEIMGIKNIVIVQNKIDLVTRERALESYKEIKAFVKGSIAENAPIIPVSAYHNTNIDILFEAIEKYIPTPEYNEGSDPIMYIARSFDVNKPGTPIDQIKGGIIGGSLTQGSLKIGDEIEIVPGIQNTRGNKTVWTNVTTEVVSLMAGKYSYDMIKPGGLAAVGTKLDPFLTKGDAFTGRIAGYIGKVPPISFSMRLEAHLLKRVVGSDQELNVEPIRAKETLMFTVATANTVGVVSNVKGTDIEVSLKYPVAAFNGMRVAIGRRVLNRWRLIGYGVIESLE.

The tr-type G domain occupies 9–201 (QPTVNIGMVG…AIEKYIPTPE (193 aa)). The interval 18–25 (GHVDHGKS) is G1. 4 residues coordinate Mg(2+): Asp-21, Ser-25, Gly-46, and Ser-48. GTP is bound at residue 21–26 (DHGKST). The interval 46–50 (GISIK) is G2. The tract at residues 88–91 (DAPG) is G3. GTP-binding positions include 144-147 (NKID) and 179-181 (SAY). The segment at 144 to 147 (NKID) is G4. The segment at 179 to 181 (SAY) is G5.

This sequence belongs to the TRAFAC class translation factor GTPase superfamily. Classic translation factor GTPase family. EIF2G subfamily. As to quaternary structure, heterotrimer composed of an alpha, a beta and a gamma chain. The cofactor is Mg(2+).

The enzyme catalyses GTP + H2O = GDP + phosphate + H(+). Functionally, eIF-2 functions in the early steps of protein synthesis by forming a ternary complex with GTP and initiator tRNA. The chain is Translation initiation factor 2 subunit gamma from Thermoplasma volcanium (strain ATCC 51530 / DSM 4299 / JCM 9571 / NBRC 15438 / GSS1).